A 95-amino-acid chain; its full sequence is DNA/RNA-binding protein Alba (95 aa).

The residue at position 13 (lysine 13) is an N6-acetyllysine.

This sequence belongs to the histone-like Alba family. Post-translationally, acetylated. Acetylation at Lys-13 decreases DNA-binding affinity.

It is found in the cytoplasm. Its subcellular location is the chromosome. In terms of biological role, binds double-stranded DNA tightly but without sequence specificity. Involved in DNA compaction. In Nitrosopumilus maritimus (strain SCM1), this protein is DNA/RNA-binding protein Alba.